Here is a 221-residue protein sequence, read N- to C-terminus: Bcl-2-related ovarian killer protein homolog A (221 aa).

The BH4 signature appears at lysine 32–histidine 44. Residues valine 64–proline 80 carry the BH3 motif. The BH1 motif lies at glutamate 110–glycine 140. The short motif at tryptophan 173 to valine 187 is the BH2 element. The chain crosses the membrane as a helical span at residues tryptophan 198–leucine 218.

It belongs to the Bcl-2 family. In terms of tissue distribution, strongest expression in ovary and eye, weaker expression in gut, kidney and brain. Little expression in liver or heart.

The protein localises to the membrane. Its function is as follows. May play a role in apoptosis. Does not appear to show pro-apoptotic activity when expressed ectopically in early embryos. This chain is Bcl-2-related ovarian killer protein homolog A, found in Danio rerio (Zebrafish).